Reading from the N-terminus, the 274-residue chain is Uridine-5'-phosphate dioxygenase (274 aa).

Fe cation-binding residues include His-103, Asp-105, and His-246.

Fe(2+) serves as cofactor.

The enzyme catalyses UMP + 2-oxoglutarate + O2 = uridine-5'-aldehyde + succinate + phosphate + CO2. It functions in the pathway antibiotic biosynthesis. With respect to regulation, inhibited by several divalent cations, including Zn(2+). Functionally, dioxygenase involved in the biosynthesis of the lipopeptidyl nucleoside antibiotic A-90289. Catalyzes the dephosphorylation and oxidation of UMP to generate uridine-5'-aldehyde, the first intermediate in the biosynthesis of A-90289. This Streptomyces sp protein is Uridine-5'-phosphate dioxygenase.